The sequence spans 300 residues: Transcription initiation factor IIB (300 aa).

A TFIIB-type zinc finger spans residues lysine 3–glutamate 34. Zn(2+)-binding residues include cysteine 7, cysteine 10, cysteine 26, and cysteine 29. Tandem repeats lie at residues serine 114–leucine 197 and aspartate 210–glutamate 291.

Belongs to the TFIIB family.

In terms of biological role, stabilizes TBP binding to an archaeal box-A promoter. Also responsible for recruiting RNA polymerase II to the pre-initiation complex (DNA-TBP-TFIIB). This is Transcription initiation factor IIB from Pyrococcus abyssi (strain GE5 / Orsay).